The following is a 396-amino-acid chain: 1-deoxy-D-xylulose 5-phosphate reductoisomerase (396 aa).

NADPH is bound by residues T17, G18, S19, I20, N47, and N130. 1-deoxy-D-xylulose 5-phosphate is bound at residue K131. Position 132 (E132) interacts with NADPH. D156 contributes to the Mn(2+) binding site. 4 residues coordinate 1-deoxy-D-xylulose 5-phosphate: S157, E158, S182, and H205. Mn(2+) is bound at residue E158. Residue G211 coordinates NADPH. Residues S218, N223, K224, and E227 each contribute to the 1-deoxy-D-xylulose 5-phosphate site. Mn(2+) is bound at residue E227.

Belongs to the DXR family. The cofactor is Mg(2+). Requires Mn(2+) as cofactor.

The catalysed reaction is 2-C-methyl-D-erythritol 4-phosphate + NADP(+) = 1-deoxy-D-xylulose 5-phosphate + NADPH + H(+). The protein operates within isoprenoid biosynthesis; isopentenyl diphosphate biosynthesis via DXP pathway; isopentenyl diphosphate from 1-deoxy-D-xylulose 5-phosphate: step 1/6. In terms of biological role, catalyzes the NADPH-dependent rearrangement and reduction of 1-deoxy-D-xylulose-5-phosphate (DXP) to 2-C-methyl-D-erythritol 4-phosphate (MEP). This Rhizobium johnstonii (strain DSM 114642 / LMG 32736 / 3841) (Rhizobium leguminosarum bv. viciae) protein is 1-deoxy-D-xylulose 5-phosphate reductoisomerase.